A 286-amino-acid chain; its full sequence is Thiamine-monophosphate kinase (286 aa).

Mg(2+)-binding residues include Asp22, Ser36, Thr37, and Asp38. Asp45 provides a ligand contact to substrate. Mg(2+) is bound by residues Asp66 and Asp111. ATP is bound by residues 110–111 (GD) and Arg136. Asp191 serves as a coordination point for Mg(2+). An ATP-binding site is contributed by Ser193. Asp194 contacts Mg(2+). Tyr282 lines the substrate pocket.

The protein belongs to the thiamine-monophosphate kinase family.

The enzyme catalyses thiamine phosphate + ATP = thiamine diphosphate + ADP. It participates in cofactor biosynthesis; thiamine diphosphate biosynthesis; thiamine diphosphate from thiamine phosphate: step 1/1. Functionally, catalyzes the ATP-dependent phosphorylation of thiamine-monophosphate (TMP) to form thiamine-pyrophosphate (TPP), the active form of vitamin B1. In Methanospirillum hungatei JF-1 (strain ATCC 27890 / DSM 864 / NBRC 100397 / JF-1), this protein is Thiamine-monophosphate kinase.